Consider the following 437-residue polypeptide: MATVLIVGKSNVGKSTLFNKLIGKKKSIVDNKEGVTRDAVSDRVSYFGKSFKLIDTCGIFERPEDIISERLKNLTLNMLSEGDIIIFVVDGKYGLTSEDYHLADLLRKSNSDVILVVNKSENEKKVFVNFDDFYSLGFGEPLFISAEQGKNIDRLIEEVIKRLEKKGLKLEEEEEKDSIIRVALIGRPNAGKSTLFNGILERERALVTPIPGTTRDAIDELVEINGKKYLFIDTAGLRRKSKVEYKSIDMYSNVRSIKSIELSDVVVFVIDSLEGITHQDQKIAGIAENRGKATVVVFNKIDLVKNFKYRKQEFIEHFMERLYFVSYSPVVFVSAQERYGIGKLIKAIKEAYNSLFYRVQTSAVNAVIQRMIMFSPPPRGLKIYYGAQVDVKPPTFLFFTNGKKVPEFYQNNIRKIIRENIYHFTGAPIFLKFKNRH.

EngA-type G domains follow at residues 2 to 167 (ATVL…EKKG) and 180 to 356 (IRVA…NSLF). GTP is bound by residues 8-15 (GKSNVGKS), 55-59 (DTCGI), 118-121 (NKSE), 186-193 (GRPNAGKS), 233-237 (DTAGL), and 299-302 (NKID). Residues 357–437 (YRVQTSAVNA…PIFLKFKNRH (81 aa)) form the KH-like domain.

The protein belongs to the TRAFAC class TrmE-Era-EngA-EngB-Septin-like GTPase superfamily. EngA (Der) GTPase family. As to quaternary structure, associates with the 50S ribosomal subunit.

Its function is as follows. GTPase that plays an essential role in the late steps of ribosome biogenesis. In Thermosipho melanesiensis (strain DSM 12029 / CIP 104789 / BI429), this protein is GTPase Der.